Reading from the N-terminus, the 213-residue chain is Orotidine 5'-phosphate decarboxylase (213 aa).

Substrate contacts are provided by residues Asp6, Lys25, Asp52 to Thr61, Ser109, Pro158 to Gly168, Gly181, and Arg182. The Proton donor role is filled by Lys54.

It belongs to the OMP decarboxylase family. Type 1 subfamily. As to quaternary structure, homodimer.

The enzyme catalyses orotidine 5'-phosphate + H(+) = UMP + CO2. The protein operates within pyrimidine metabolism; UMP biosynthesis via de novo pathway; UMP from orotate: step 2/2. Its function is as follows. Catalyzes the decarboxylation of orotidine 5'-monophosphate (OMP) to uridine 5'-monophosphate (UMP). The chain is Orotidine 5'-phosphate decarboxylase from Sulfurisphaera tokodaii (strain DSM 16993 / JCM 10545 / NBRC 100140 / 7) (Sulfolobus tokodaii).